Here is a 198-residue protein sequence, read N- to C-terminus: SOSS complex subunit B2 (198 aa).

The OB DNA-binding region spans 26-89; it reads IVLEIGRVTK…SMWKGCLTLY (64 aa). Residues 114-198 form a disordered region; that stretch reads EPNPDYRGQQ…ARDPRRAFKR (85 aa). 2 stretches are compositionally biased toward polar residues: residues 136-151 and 173-188; these read STNT…QTGP and LPGT…TISN.

This sequence belongs to the SOSS-B family. SOSS-B2 subfamily. Component of the SOSS complex, composed of SOSS-B (SOSS-B1/NABP2 or SOSS-B2/NABP1), SOSS-A/INTS3 and SOSS-C/INIP. SOSS complexes containing SOSS-B1/NABP2 are more abundant than complexes containing SOSS-B2/NABP1. Ubiquitous with high expression in the thymus.

The protein localises to the nucleus. Functionally, component of the SOSS complex, a multiprotein complex that functions downstream of the MRN complex to promote DNA repair and G2/M checkpoint. In the SOSS complex, acts as a sensor of single-stranded DNA that binds to single-stranded DNA, in particular to polypyrimidines. The SOSS complex associates with DNA lesions and influences diverse endpoints in the cellular DNA damage response including cell-cycle checkpoint activation, recombinational repair and maintenance of genomic stability. Required for efficient homologous recombination-dependent repair of double-strand breaks (DSBs) and ATM-dependent signaling pathways. The sequence is that of SOSS complex subunit B2 (Nabp1) from Mus musculus (Mouse).